A 353-amino-acid polypeptide reads, in one-letter code: UDP-N-acetylglucosamine--N-acetylmuramyl-(pentapeptide) pyrophosphoryl-undecaprenol N-acetylglucosamine transferase (353 aa).

Residues 10–12 (TGG), N124, S183, and Q283 each bind UDP-N-acetyl-alpha-D-glucosamine.

This sequence belongs to the glycosyltransferase 28 family. MurG subfamily.

It localises to the cell inner membrane. The enzyme catalyses di-trans,octa-cis-undecaprenyl diphospho-N-acetyl-alpha-D-muramoyl-L-alanyl-D-glutamyl-meso-2,6-diaminopimeloyl-D-alanyl-D-alanine + UDP-N-acetyl-alpha-D-glucosamine = di-trans,octa-cis-undecaprenyl diphospho-[N-acetyl-alpha-D-glucosaminyl-(1-&gt;4)]-N-acetyl-alpha-D-muramoyl-L-alanyl-D-glutamyl-meso-2,6-diaminopimeloyl-D-alanyl-D-alanine + UDP + H(+). It participates in cell wall biogenesis; peptidoglycan biosynthesis. Cell wall formation. Catalyzes the transfer of a GlcNAc subunit on undecaprenyl-pyrophosphoryl-MurNAc-pentapeptide (lipid intermediate I) to form undecaprenyl-pyrophosphoryl-MurNAc-(pentapeptide)GlcNAc (lipid intermediate II). The polypeptide is UDP-N-acetylglucosamine--N-acetylmuramyl-(pentapeptide) pyrophosphoryl-undecaprenol N-acetylglucosamine transferase (Helicobacter pylori (strain G27)).